Here is a 445-residue protein sequence, read N- to C-terminus: E3 ubiquitin-protein ligase pellino homolog 3 (445 aa).

The disordered stretch occupies residues 1–24 (MVLEGNPDVGSPRTSDLQHPGSQG). S11 is subject to Phosphoserine. The segment covering 12–24 (PRTSDLQHPGSQG) has biased composition (polar residues).

The protein belongs to the pellino family. As to quaternary structure, interacts with TRAF6, MAP3K14 and MAP3K7. In terms of processing, phosphorylated by IRAK1 enhancing its E3 ligase activity.

The catalysed reaction is S-ubiquitinyl-[E2 ubiquitin-conjugating enzyme]-L-cysteine + [acceptor protein]-L-lysine = [E2 ubiquitin-conjugating enzyme]-L-cysteine + N(6)-ubiquitinyl-[acceptor protein]-L-lysine.. It functions in the pathway protein modification; protein ubiquitination. Functionally, E3 ubiquitin ligase catalyzing the covalent attachment of ubiquitin moieties onto substrate proteins. Involved in the TLR and IL-1 signaling pathways via interaction with the complex containing IRAK kinases and TRAF6. Mediates 'Lys-63'-linked polyubiquitination of IRAK1. Can activate AP1/JUN and ELK1. Acts as a regulator of innate immunity by mediating 'Lys-63'-linked polyubiquitination of RIPK2 downstream of NOD1 and NOD2, thereby transforming RIPK2 into a scaffolding protein for downstream effectors, ultimately leading to activation of the NF-kappa-B and MAP kinases signaling. Catalyzes 'Lys-63'-linked polyubiquitination of RIPK2 in parallel of XIAP. The chain is E3 ubiquitin-protein ligase pellino homolog 3 from Mus musculus (Mouse).